The following is a 472-amino-acid chain: Argininosuccinate lyase (472 aa).

The protein belongs to the lyase 1 family. Argininosuccinate lyase subfamily.

It localises to the cytoplasm. The catalysed reaction is 2-(N(omega)-L-arginino)succinate = fumarate + L-arginine. It functions in the pathway amino-acid biosynthesis; L-arginine biosynthesis; L-arginine from L-ornithine and carbamoyl phosphate: step 3/3. In Mycolicibacterium paratuberculosis (strain ATCC BAA-968 / K-10) (Mycobacterium paratuberculosis), this protein is Argininosuccinate lyase.